We begin with the raw amino-acid sequence, 540 residues long: Suppressor of tumorigenicity 7 protein-like (540 aa).

The next 4 membrane-spanning stretches (helical) occupy residues tryptophan 24–leucine 44, phenylalanine 68–tryptophan 88, leucine 475–leucine 495, and leucine 502–alanine 522.

Belongs to the ST7 family.

It localises to the membrane. The protein is Suppressor of tumorigenicity 7 protein-like (st7l) of Danio rerio (Zebrafish).